Here is a 336-residue protein sequence, read N- to C-terminus: Palmitoyltransferase PFA3 (336 aa).

Over 1–6 (MNDRLS) the chain is Cytoplasmic. The helical transmembrane segment at 7–29 (LTSLFPRCLTTCLYIWTAYITLT) threads the bilayer. The Vacuolar segment spans residues 30–37 (RIHQIPRW). The helical transmembrane segment at 38-58 (FLALTIVPTLAVALYTYYKVI) threads the bilayer. The Cytoplasmic portion of the chain corresponds to 59-147 (ARGPGSPLDF…AECTGFRNQK (89 aa)). The region spanning 104–154 (RVCQVCHVWKPDRCHHCSSCDVCILKMDHHCPWFAECTGFRNQKFFIQFLM) is the DHHC domain. The chain crosses the membrane as a helical span at residues 148–168 (FFIQFLMYTTLYAFLVLIYTC). Over 169 to 188 (YELGTWFNSGSFNRELIDFH) the chain is Vacuolar. The chain crosses the membrane as a helical span at residues 189–209 (LLGVALLAVAVFISVLAFTCF). Residues 210–336 (SIYQVCKNQT…RASVEIIDAN (127 aa)) are Cytoplasmic-facing.

The protein belongs to the DHHC palmitoyltransferase family. PFA3 subfamily. In terms of processing, autopalmitoylated.

It is found in the vacuole membrane. The catalysed reaction is L-cysteinyl-[protein] + hexadecanoyl-CoA = S-hexadecanoyl-L-cysteinyl-[protein] + CoA. Palmitoyltransferase specific for VAC8. Palmitoylates VAC8 at one or more of its N-terminal cysteine residues, which is required for its proper membrane localization. The protein is Palmitoyltransferase PFA3 (PFA3) of Saccharomyces cerevisiae (strain ATCC 204508 / S288c) (Baker's yeast).